Reading from the N-terminus, the 236-residue chain is Phosphoribosylaminoimidazole-succinocarboxamide synthase (236 aa).

It belongs to the SAICAR synthetase family.

The enzyme catalyses 5-amino-1-(5-phospho-D-ribosyl)imidazole-4-carboxylate + L-aspartate + ATP = (2S)-2-[5-amino-1-(5-phospho-beta-D-ribosyl)imidazole-4-carboxamido]succinate + ADP + phosphate + 2 H(+). It functions in the pathway purine metabolism; IMP biosynthesis via de novo pathway; 5-amino-1-(5-phospho-D-ribosyl)imidazole-4-carboxamide from 5-amino-1-(5-phospho-D-ribosyl)imidazole-4-carboxylate: step 1/2. The protein is Phosphoribosylaminoimidazole-succinocarboxamide synthase of Campylobacter concisus (strain 13826).